Reading from the N-terminus, the 53-residue chain is Minor histocompatibility protein HMSD variant form (53 aa).

As to quaternary structure, ACC-6 forms a complex with MHC HLA-B*4403. As to expression, highly expressed in dendritic cells and primary leukemia cells, especially those of myeloid lineage. ACC-6 expression is limited to cells of the hematopoietic lineage.

In terms of biological role, this splice variant of HMSD is the precursor of the histocompatibility antigen ACC-6. More generally, minor histocompatibility antigens (mHags) refer to immunogenic peptide which, when complexed with MHC, can generate an immune response after recognition by specific T-cells. The peptides are derived from polymorphic intracellular proteins, which are cleaved by normal pathways of antigen processing. The binding of these peptides to MHC class I or class II molecules and its expression on the cell surface can stimulate T-cell responses and thereby trigger graft rejection or graft-versus-host disease (GVHD) after hematopoietic stem cell transplantation from HLA-identical sibling donor. GVHD is a frequent complication after bone marrow transplantation (BMT), due to mismatch of minor histocompatibility antigen in HLA-matched sibling marrow transplants. However, associated with GVHD, a favorable graft-versus-leukemia (GVL) can be induced by donor-recipient disparities in mHags. ACC-6 is presented to the cell surface by MHC HLA-B*4403. This complex specifically elicits donor-cytotoxic T-lymphocyte (CTL) reactivity against hematologic malignancies after treatment by HLA-identical allogenic BMT. It induces cell recognition and lysis by CTL. Immunogenicity of most autosomal mHags results from single-nucleotide polymorphisms that cause amino-acid substitutions within epitopes, leading to the differential recognition of peptides between donor and recipient. The sequence is that of Minor histocompatibility protein HMSD variant form (HMSD) from Homo sapiens (Human).